A 185-amino-acid polypeptide reads, in one-letter code: MANEVIEKAKDNMKKSIAVFQKELGGIRAGVANASLLEGIKVDYYGVPTPLTQMSSVSIPEARVLMVTPYDKSSLDDIEHAILASDLGITPANDGTVIRIVIPQLTGERRQEIAKQVGKLAEKGKIAVRNVRRDAMDTLKRQEKNGDITEDEQRSLEKQVQKVTDDATKEIDKLADQKSQEITQG.

Residues 138 to 179 are compositionally biased toward basic and acidic residues; it reads TLKRQEKNGDITEDEQRSLEKQVQKVTDDATKEIDKLADQKS. The disordered stretch occupies residues 138 to 185; that stretch reads TLKRQEKNGDITEDEQRSLEKQVQKVTDDATKEIDKLADQKSQEITQG.

It belongs to the RRF family.

Its subcellular location is the cytoplasm. Functionally, responsible for the release of ribosomes from messenger RNA at the termination of protein biosynthesis. May increase the efficiency of translation by recycling ribosomes from one round of translation to another. In Lactobacillus gasseri (strain ATCC 33323 / DSM 20243 / BCRC 14619 / CIP 102991 / JCM 1131 / KCTC 3163 / NCIMB 11718 / NCTC 13722 / AM63), this protein is Ribosome-recycling factor.